The primary structure comprises 539 residues: Phosphoenolpyruvate carboxykinase (ATP) (539 aa).

Substrate-binding residues include arginine 64, tyrosine 206, and lysine 212. ATP-binding positions include lysine 212, histidine 231, and 247-255; that span reads GLSGTGKTT. Residues lysine 212 and histidine 231 each contribute to the Mn(2+) site. Residue aspartate 268 participates in Mn(2+) binding. ATP contacts are provided by residues glutamate 296, arginine 332, 448 to 449, and threonine 454; that span reads RI. Residue arginine 332 participates in substrate binding.

Belongs to the phosphoenolpyruvate carboxykinase (ATP) family. As to quaternary structure, monomer. Mn(2+) serves as cofactor.

The protein localises to the cytoplasm. It catalyses the reaction oxaloacetate + ATP = phosphoenolpyruvate + ADP + CO2. It participates in carbohydrate biosynthesis; gluconeogenesis. Functionally, involved in the gluconeogenesis. Catalyzes the conversion of oxaloacetate (OAA) to phosphoenolpyruvate (PEP) through direct phosphoryl transfer between the nucleoside triphosphate and OAA. The chain is Phosphoenolpyruvate carboxykinase (ATP) from Yersinia pestis bv. Antiqua (strain Antiqua).